The sequence spans 318 residues: Transaldolase (318 aa).

Lys-132 (schiff-base intermediate with substrate) is an active-site residue.

It belongs to the transaldolase family. Type 1 subfamily. In terms of assembly, homodimer.

The protein resides in the cytoplasm. It carries out the reaction D-sedoheptulose 7-phosphate + D-glyceraldehyde 3-phosphate = D-erythrose 4-phosphate + beta-D-fructose 6-phosphate. It participates in carbohydrate degradation; pentose phosphate pathway; D-glyceraldehyde 3-phosphate and beta-D-fructose 6-phosphate from D-ribose 5-phosphate and D-xylulose 5-phosphate (non-oxidative stage): step 2/3. Functionally, transaldolase is important for the balance of metabolites in the pentose-phosphate pathway. The polypeptide is Transaldolase (Shewanella pealeana (strain ATCC 700345 / ANG-SQ1)).